The primary structure comprises 927 residues: DNA-binding protein RFX6 (927 aa).

Disordered regions lie at residues 1-21 (MAKV…PQLP) and 81-108 (NFSS…QKKS). The RFX-type winged-helix DNA-binding region spans 123 to 198 (TLQWLEDNYI…YHYYGIGIKE (76 aa)).

This sequence belongs to the RFX family. As to quaternary structure, interacts with RFX3. As to expression, in the adult pancreas, expression is restricted to the islets where it could be detected in all endocrine lineages.

It localises to the nucleus. In terms of biological role, transcription factor required to direct islet cell differentiation during endocrine pancreas development. Specifically required for the differentiation of 4 of the 5 islet cell types and for the production of insulin. Not required for pancreatic PP (polypeptide-producing) cells differentiation. Acts downstream of NEUROG3 and regulates the transcription factors involved in beta-cell maturation and function, thereby restricting the expression of the beta-cell differentiation and specification genes, and thus the beta-cell fate choice. Activates transcription by forming a heterodimer with RFX3 and binding to the X-box in the promoter of target genes. Involved in glucose-stimulated insulin secretion by promoting insulin and L-type calcium channel gene transcription. The polypeptide is DNA-binding protein RFX6 (Rfx6) (Mus musculus (Mouse)).